A 364-amino-acid chain; its full sequence is 4-hydroxythreonine-4-phosphate dehydrogenase (364 aa).

Residues H148 and T149 each coordinate substrate. 3 residues coordinate a divalent metal cation: H177, H216, and H301. Positions 309, 318, and 327 each coordinate substrate.

It belongs to the PdxA family. Homodimer. Zn(2+) is required as a cofactor. The cofactor is Mg(2+). Co(2+) serves as cofactor.

Its subcellular location is the cytoplasm. The enzyme catalyses 4-(phosphooxy)-L-threonine + NAD(+) = 3-amino-2-oxopropyl phosphate + CO2 + NADH. The protein operates within cofactor biosynthesis; pyridoxine 5'-phosphate biosynthesis; pyridoxine 5'-phosphate from D-erythrose 4-phosphate: step 4/5. Functionally, catalyzes the NAD(P)-dependent oxidation of 4-(phosphooxy)-L-threonine (HTP) into 2-amino-3-oxo-4-(phosphooxy)butyric acid which spontaneously decarboxylates to form 3-amino-2-oxopropyl phosphate (AHAP). The chain is 4-hydroxythreonine-4-phosphate dehydrogenase from Campylobacter jejuni subsp. jejuni serotype O:2 (strain ATCC 700819 / NCTC 11168).